The sequence spans 401 residues: Argininosuccinate synthase (401 aa).

ATP-binding positions include 10–18 (AYSGGVDTS) and Ala-38. Residue Tyr-89 coordinates L-citrulline. Gly-119 contributes to the ATP binding site. L-aspartate-binding residues include Thr-121, Asn-125, and Asp-126. Asn-125 contributes to the L-citrulline binding site. The L-citrulline site is built by Arg-129, Ser-177, Ser-186, Glu-262, and Tyr-274.

Belongs to the argininosuccinate synthase family. Type 1 subfamily. In terms of assembly, homotetramer.

It localises to the cytoplasm. It carries out the reaction L-citrulline + L-aspartate + ATP = 2-(N(omega)-L-arginino)succinate + AMP + diphosphate + H(+). It participates in amino-acid biosynthesis; L-arginine biosynthesis; L-arginine from L-ornithine and carbamoyl phosphate: step 2/3. The protein is Argininosuccinate synthase of Prochlorococcus marinus (strain MIT 9303).